Consider the following 790-residue polypeptide: Lon protease 2 (790 aa).

A Lon N-terminal domain is found at 18-210 (LRILPLRNMV…HVTFYMTRQL (193 aa)). 362-369 (GPPGVGKT) is a binding site for ATP. Residues 598–779 (SWGCGIATGL…SDVLQLALLP (182 aa)) form the Lon proteolytic domain. Residues serine 685 and lysine 728 contribute to the active site.

It belongs to the peptidase S16 family. Homohexamer. Organized in a ring with a central cavity.

The protein localises to the cytoplasm. It catalyses the reaction Hydrolysis of proteins in presence of ATP.. Its function is as follows. ATP-dependent serine protease that mediates the selective degradation of mutant and abnormal proteins as well as certain short-lived regulatory proteins. Required for cellular homeostasis and for survival from DNA damage and developmental changes induced by stress. Degrades polypeptides processively to yield small peptide fragments that are 5 to 10 amino acids long. Binds to DNA in a double-stranded, site-specific manner. This is Lon protease 2 from Syntrophobacter fumaroxidans (strain DSM 10017 / MPOB).